The sequence spans 702 residues: Elongation factor G (702 aa).

The tr-type G domain occupies 8-290 (ERYRNIGISA…AVIEYLPAPT (283 aa)). Residues 17-24 (AHIDAGKT), 88-92 (DTPGH), and 142-145 (NKMD) each bind GTP.

This sequence belongs to the TRAFAC class translation factor GTPase superfamily. Classic translation factor GTPase family. EF-G/EF-2 subfamily.

The protein localises to the cytoplasm. Functionally, catalyzes the GTP-dependent ribosomal translocation step during translation elongation. During this step, the ribosome changes from the pre-translocational (PRE) to the post-translocational (POST) state as the newly formed A-site-bound peptidyl-tRNA and P-site-bound deacylated tRNA move to the P and E sites, respectively. Catalyzes the coordinated movement of the two tRNA molecules, the mRNA and conformational changes in the ribosome. The sequence is that of Elongation factor G from Yersinia pseudotuberculosis serotype O:1b (strain IP 31758).